The sequence spans 51 residues: Large ribosomal subunit protein eL39 (51 aa).

Residues 1–23 (MSALKKSFIKRKLAKKQKQNRPM) are disordered. Over residues 7 to 19 (SFIKRKLAKKQKQ) the composition is skewed to basic residues.

This sequence belongs to the eukaryotic ribosomal protein eL39 family. As to quaternary structure, interacts with impact.

The polypeptide is Large ribosomal subunit protein eL39 (rpl-39) (Caenorhabditis elegans).